The chain runs to 318 residues: Pantothenate kinase (318 aa).

Residue 96-103 (GSVAVGKS) participates in ATP binding.

It belongs to the prokaryotic pantothenate kinase family.

It is found in the cytoplasm. It catalyses the reaction (R)-pantothenate + ATP = (R)-4'-phosphopantothenate + ADP + H(+). The protein operates within cofactor biosynthesis; coenzyme A biosynthesis; CoA from (R)-pantothenate: step 1/5. The chain is Pantothenate kinase from Coxiella burnetii (strain RSA 493 / Nine Mile phase I).